We begin with the raw amino-acid sequence, 161 residues long: Hydrogenase expression/formation protein HoxO (161 aa).

Belongs to the HupG/HyaE family.

The sequence is that of Hydrogenase expression/formation protein HoxO (hoxO) from Cupriavidus necator (strain ATCC 17699 / DSM 428 / KCTC 22496 / NCIMB 10442 / H16 / Stanier 337) (Ralstonia eutropha).